A 1272-amino-acid polypeptide reads, in one-letter code: Ubiquitin carboxyl-terminal hydrolase 2 (1272 aa).

The USP domain maps to 736–1258 (TGINNIGNTC…TPYFLVYVKQ (523 aa)). Cys-745 acts as the Nucleophile in catalysis. A disordered region spans residues 884-918 (DGLNGDVGTDANRKKNESNDAEVSENEDTTGLTSP). The segment covering 902-911 (NDAEVSENED) has biased composition (acidic residues). A Phosphoserine modification is found at Ser-907. His-1209 acts as the Proton acceptor in catalysis.

It belongs to the peptidase C19 family. Forms a ternary complex with RSP5 and RUP1. Interacts with RSP5. Interacts with FZO1.

The catalysed reaction is Thiol-dependent hydrolysis of ester, thioester, amide, peptide and isopeptide bonds formed by the C-terminal Gly of ubiquitin (a 76-residue protein attached to proteins as an intracellular targeting signal).. In terms of biological role, has an ATP-independent isopeptidase activity, cleaving at the C-terminus of the ubiquitin moiety in natural or engineered linear fusion proteins, irrespective of their size or the presence of an N-terminal extension to ubiquitin. Hydrolyzes polyubiquitinated 'Lys-63' polyubiquitin chains in RPO21, producing mono-ubiquitinated RNA polymerase II. Removes ubiquitin chains that initiate proteolysis of FZO1 and inhibit mitochondrial fusion. In Saccharomyces cerevisiae (strain ATCC 204508 / S288c) (Baker's yeast), this protein is Ubiquitin carboxyl-terminal hydrolase 2 (UBP2).